Here is a 258-residue protein sequence, read N- to C-terminus: Phosphate import ATP-binding protein PstB (258 aa).

Positions 5 to 247 constitute an ABC transporter domain; sequence LDLKGVNIYY…EKIFSNPSQK (243 aa). ATP is bound at residue 37–44; sequence GPSGCGKT.

The protein belongs to the ABC transporter superfamily. Phosphate importer (TC 3.A.1.7) family. The complex is composed of two ATP-binding proteins (PstB), two transmembrane proteins (PstC and PstA) and a solute-binding protein (PstS).

Its subcellular location is the cell membrane. The catalysed reaction is phosphate(out) + ATP + H2O = ADP + 2 phosphate(in) + H(+). Its function is as follows. Part of the ABC transporter complex PstSACB involved in phosphate import. Responsible for energy coupling to the transport system. In Mycolicibacterium paratuberculosis (strain ATCC BAA-968 / K-10) (Mycobacterium paratuberculosis), this protein is Phosphate import ATP-binding protein PstB.